Here is a 334-residue protein sequence, read N- to C-terminus: Heat-inducible transcription repressor HrcA (334 aa).

The protein belongs to the HrcA family.

Negative regulator of class I heat shock genes (grpE-dnaK-dnaJ and groELS operons). Prevents heat-shock induction of these operons. The protein is Heat-inducible transcription repressor HrcA of Verminephrobacter eiseniae (strain EF01-2).